Consider the following 266-residue polypeptide: MKFAVSSKGDQVSDTLKSKIQAYLLDFDMELDENEPEIVISVGGDGTLLYAFHRYSDRLDKTAFVGVHTGHLGFYADWVPHEIEKLVLAIAKTPYHTVEYPLLEVIVTYHENEREERYLALNECTIKSIEGSLVADVEIKGQLFETFRGDGLCLSTPSGSTAYNKALGGAIIHPSIRAIQLAEMASINNRVFRTVGSPLLLPSHHDCMIKPRNEVDFQVTIDHLTLLHKDVKSIRCQVASEKVRFARFRPFPFWKRVQDSFIGKGE.

D45 acts as the Proton acceptor in catalysis. NAD(+) contacts are provided by residues 45–46 (DG), 122–123 (NE), and R148. Residue D150 participates in ATP binding. Residues S158 and 161 to 166 (TAYNKA) contribute to the NAD(+) site.

Belongs to the NAD kinase family. Homodimer. Requires Ca(2+) as cofactor. Mn(2+) is required as a cofactor.

The protein resides in the cytoplasm. It carries out the reaction NAD(+) + ATP = ADP + NADP(+) + H(+). Its activity is regulated as follows. Allosterically inhibited by NADP and activated by quinolinic acid. Strongly inhibited by HgCl(2). Its function is as follows. Involved in the regulation of the intracellular balance of NAD and NADP, and is a key enzyme in the biosynthesis of NADP. Catalyzes specifically the phosphorylation on 2'-hydroxyl of the adenosine moiety of NAD to yield NADP. It can use ATP and other nucleoside triphosphates (GTP, UTP) as well as inorganic polyphosphate (poly(P)) as a source of phosphorus. This Bacillus subtilis (strain 168) protein is NAD kinase 1 (ppnKA).